The sequence spans 335 residues: Methyltransferase pgmE (335 aa).

This sequence belongs to the methyltransferase superfamily.

It functions in the pathway pigment biosynthesis. The protein operates within secondary metabolite biosynthesis. In terms of biological role, methyltransferase; part of the gene cluster that mediates the biosynthesis of pleosporalin A, ascomycone A, as well as a third cryptic naphthoquinone derived pigment, all responsible for the coloration of conidia. Essential for the production of pleosporalin A, but not the 2 other final products. The pathway begins with the biosynthesis of the cyclized heptaketide 3-acetonyl-1,6,8-trihydroxy-2-naphthaldehyde by the NR-PKS pgmA. The C-6 hydroxyl group is further methylated by the O-methyltransferase pgmB to yield fusarubinaldehyde which is in turn oxidized by the cytochrome P450 monooxygenase pgmC at C-9. The C-1 hydroxyl group is then methylated spontaneously. Although pgmE, pgmD and pgmH are essential for the production of pleosporalin A, it is not the case for the 2 other final products and it remains difficult to assign a specific function to each enzyme. PgmF and pgmG seem not to be involved in pigment biosynthesis although they were regulated by the cluster-specific transcription factor pgmR. This Aspergillus terreus protein is Methyltransferase pgmE.